The following is a 180-amino-acid chain: Cytokinin-beta-glucosidase 3 (180 aa).

Its function is as follows. Hydrolyzes cytokinin glucosides thus liberating free cytokinins. In Panax ginseng (Korean ginseng), this protein is Cytokinin-beta-glucosidase 3 (ROLC3).